A 221-amino-acid polypeptide reads, in one-letter code: Octanoyltransferase (221 aa).

The BPL/LPL catalytic domain maps to 35 to 221 (ESYENRIIFC…RELLAALLSK (187 aa)). Residues 80-87 (RGGDITYH), 152-154 (AIG), and 165-167 (GLA) each bind substrate. C183 functions as the Acyl-thioester intermediate in the catalytic mechanism.

Belongs to the LipB family.

The protein resides in the cytoplasm. It catalyses the reaction octanoyl-[ACP] + L-lysyl-[protein] = N(6)-octanoyl-L-lysyl-[protein] + holo-[ACP] + H(+). It functions in the pathway protein modification; protein lipoylation via endogenous pathway; protein N(6)-(lipoyl)lysine from octanoyl-[acyl-carrier-protein]: step 1/2. Its function is as follows. Catalyzes the transfer of endogenously produced octanoic acid from octanoyl-acyl-carrier-protein onto the lipoyl domains of lipoate-dependent enzymes. Lipoyl-ACP can also act as a substrate although octanoyl-ACP is likely to be the physiological substrate. The polypeptide is Octanoyltransferase (Bacteroides fragilis (strain YCH46)).